A 480-amino-acid polypeptide reads, in one-letter code: Amino acid permease 5 (480 aa).

Residues 1–25 (MVVQNVQDLDVLPKHSSDSFDDDGR) are disordered. Residues 1–31 (MVVQNVQDLDVLPKHSSDSFDDDGRPKRTGT) lie on the Cytoplasmic side of the membrane. Residues 11–25 (VLPKHSSDSFDDDGR) are compositionally biased toward basic and acidic residues. 2 consecutive transmembrane segments (helical) span residues 32-52 (VWTASAHIITAVIGSGVLSLA) and 53-73 (WAVAQIGWIGGPVAMLLFSFV). At 74–120 (TFYTSTLLCSCYRSGDSVTGKRNYTYMDAIHSNLGGIKVKVCGVVQY) the chain is on the cytoplasmic side. A helical transmembrane segment spans residues 121–141 (VNLFGTAIGYTIASAISLVAI). Residues 142–157 (QRTSCQQMNGPNDPCH) lie on the Extracellular side of the membrane. Residues 158–178 (VNGNVYMIAFGIVQIIFSQIP) traverse the membrane as a helical segment. At 179–182 (DFDQ) the chain is on the cytoplasmic side. A helical membrane pass occupies residues 183–203 (LWWLSIVAAVMSFAYSAIGLG). The Extracellular portion of the chain corresponds to 204 to 241 (LGVSKVVENKEIKGSLTGVTVGTVTLSGTVTSSQKIWR). A helical membrane pass occupies residues 242-262 (TFQSLGNIAFAYSYSMILIEI). The Cytoplasmic segment spans residues 263 to 280 (QDTVKSPPAEVNTMRKAT). The chain crosses the membrane as a helical span at residues 281-301 (FVSVAVTTVFYMLCGCVGYAA). At 302–328 (FGDNAPGNLLAHGGFRNPYWLLDIANL) the chain is on the extracellular side. A helical membrane pass occupies residues 329–349 (AIVIHLVGAYQVYCQPLFAFV). Topologically, residues 350–383 (EKEASRRFPESEFVTKEIKIQLFPGKPFNLNLFR) are cytoplasmic. The chain crosses the membrane as a helical span at residues 384-404 (LVWRTFFVMTTTLISMLMPFF). The Extracellular portion of the chain corresponds to 405–406 (ND). A helical membrane pass occupies residues 407–427 (VVGLLGAIGFWPLTVYFPVEM). The Cytoplasmic segment spans residues 428-445 (YIAQKNVPRWGTKWVCLQ). Residues 446 to 466 (VLSVTCLFVSVAAAAGSVIGI) traverse the membrane as a helical segment. The Extracellular portion of the chain corresponds to 467-480 (VSDLKVYKPFQSEF).

Belongs to the amino acid/polyamine transporter 2 family. Amino acid/auxin permease (AAAP) (TC 2.A.18.2) subfamily. Expressed in leaves, stems, roots, siliques and flowers.

It localises to the cell membrane. Inhibited by 2,4-dinitrophenol. Its function is as follows. Amino acid-proton symporter. Stereospecific transporter with a broad specificity for glutamate and both neutral and basic amino acids. Reduced affinities for asparagine and valine. High affinity transport of the cationic amino acids arginine and lysine, but not of histidine. This chain is Amino acid permease 5 (AAP5), found in Arabidopsis thaliana (Mouse-ear cress).